Reading from the N-terminus, the 178-residue chain is Gamma-crystallin S (178 aa).

N-acetylserine is present on Ser2. Residues Ser2 to Gly5 form an N-terminal arm region. 2 consecutive Beta/gamma crystallin 'Greek key' domains span residues Thr6–Gly44 and Gly45–His87. Residues Leu88–Gln93 are connecting peptide. 2 Beta/gamma crystallin 'Greek key' domains span residues Tyr94 to Asp134 and Gly135 to Val177.

The protein belongs to the beta/gamma-crystallin family. In terms of assembly, monomer.

Its function is as follows. Crystallins are the dominant structural components of the vertebrate eye lens. The polypeptide is Gamma-crystallin S (CRYGS) (Canis lupus familiaris (Dog)).